The following is an 87-amino-acid chain: Small ribosomal subunit protein uS19 (87 aa).

Belongs to the universal ribosomal protein uS19 family.

In terms of biological role, protein S19 forms a complex with S13 that binds strongly to the 16S ribosomal RNA. This is Small ribosomal subunit protein uS19 (rpsS) from Mycoplasma genitalium (strain ATCC 33530 / DSM 19775 / NCTC 10195 / G37) (Mycoplasmoides genitalium).